Here is a 267-residue protein sequence, read N- to C-terminus: Hydroxyethylthiazole kinase (267 aa).

A substrate-binding site is contributed by methionine 48. Positions 124 and 170 each coordinate ATP. Glycine 197 is a substrate binding site.

Belongs to the Thz kinase family. It depends on Mg(2+) as a cofactor.

It carries out the reaction 5-(2-hydroxyethyl)-4-methylthiazole + ATP = 4-methyl-5-(2-phosphooxyethyl)-thiazole + ADP + H(+). The protein operates within cofactor biosynthesis; thiamine diphosphate biosynthesis; 4-methyl-5-(2-phosphoethyl)-thiazole from 5-(2-hydroxyethyl)-4-methylthiazole: step 1/1. In terms of biological role, catalyzes the phosphorylation of the hydroxyl group of 4-methyl-5-beta-hydroxyethylthiazole (THZ). The sequence is that of Hydroxyethylthiazole kinase from Aliivibrio fischeri (strain ATCC 700601 / ES114) (Vibrio fischeri).